The following is a 1784-amino-acid chain: Sodium channel protein type 4 subunit alpha B (1784 aa).

The Cytoplasmic portion of the chain corresponds to 1–130 (MARLLPPTGT…RAAIRILIHS (130 aa)). The segment at 29-48 (AEEAAEQERMKEQNVKVAEE) is disordered. The stretch at 112–429 (CLSPFNPVRR…VVAMAYAEQN (318 aa)) is one I repeat. The chain crosses the membrane as a helical span at residues 131–149 (LFSLVIMLTILTNCVFMAM). The Extracellular portion of the chain corresponds to 150-156 (SDPPGWS). A helical membrane pass occupies residues 157–177 (KILEYVFTGIYTFEAMVKVLS). The Cytoplasmic portion of the chain corresponds to 178–191 (RGFCIGDFTFLRDP). A helical transmembrane segment spans residues 192 to 209 (WNWLDFMVISMAYLTEFV). At 210–215 (DLGNIS) the chain is on the extracellular side. N-linked (GlcNAc...) asparagine glycosylation is present at Asn-213. The helical transmembrane segment at 216–232 (ALRTFRVLRALKTITVI) threads the bilayer. The Cytoplasmic portion of the chain corresponds to 233–251 (PGLKTIVGALIQSVKKLAD). The chain crosses the membrane as a helical span at residues 252–271 (VMILTVFCLSVFALIGLQLF). Residues 272 to 366 (MGNLRQKCVL…PNYGYTSYDN (95 aa)) lie on the Extracellular side of the membrane. An intrachain disulfide couples Cys-279 to Cys-335. N-linked (GlcNAc...) asparagine glycans are attached at residues Asn-291, Asn-304, and Asn-337. A disulfide bridge links Cys-344 with Cys-350. Residues 367 to 391 (FGWAFLALFRLMTQDFWENLFQLTL) constitute an intramembrane region (pore-forming). The Extracellular segment spans residues 392–398 (RAAGKTY). A helical transmembrane segment spans residues 399 to 419 (MIFFVVIIFLGSFYLINLILA). Topologically, residues 420-568 (VVAMAYAEQN…RIVYLFVMDP (149 aa)) are cytoplasmic. The tract at residues 455-478 (EQKNGMVNGSKTSLSSKKKGDNDQ) is disordered. One copy of the II repeat lies at 550-821 (CCIPWVKFKR…QIAISRITRG (272 aa)). A helical transmembrane segment spans residues 569 to 587 (FVDLGITLCIVLNTVFMAM). Residues 588 to 598 (EHYPMSVHVEE) are Extracellular-facing. A helical membrane pass occupies residues 599-618 (VLAIGNLVFTGIFAAEMVLK). Over 619–632 (LIALDPYYYFQVGW) the chain is Cytoplasmic. A helical membrane pass occupies residues 633–652 (NIFDSIIVTMSLVELMLADV). Topologically, residues 653 to 654 (EG) are extracellular. Residues 655–672 (LSVLRSFRLMRVFKLAKS) form a helical membrane-spanning segment. Over 673-688 (WPTLNMLIKIIGNSVG) the chain is Cytoplasmic. Residues 689 to 707 (ALGNLTLVLAIIVFIFAVV) form a helical membrane-spanning segment. Topologically, residues 708–736 (GMQLFGKSYTDSVCKISSDCELPRWHMAD) are extracellular. A disulfide bridge connects residues Cys-721 and Cys-727. An intramembrane region (pore-forming) is located at residues 737–757 (FFHAFLIIFRVLCGEWIETMW). Topologically, residues 758–768 (DCMEVAGQGMC) are extracellular. Cys-759 and Cys-768 are oxidised to a cystine. The helical transmembrane segment at 769-787 (IIVFMMVMVIGNLVVLNLF) threads the bilayer. At 788-973 (LALLLSSFSG…TCFAIVEHSY (186 aa)) the chain is on the cytoplasmic side. A disordered region spans residues 870 to 928 (PIANGESDDDDGNGSSEDEDDEGRDINMKKKNGDESSTCSTVDKPPEVEDLVEEEEEDL). Residues 875–892 (ESDDDDGNGSSEDEDDEG) are compositionally biased toward acidic residues. The span at 893 to 903 (RDINMKKKNGD) shows a compositional bias: basic and acidic residues. Residues 917–928 (VEDLVEEEEEDL) show a composition bias toward acidic residues. One copy of the III repeat lies at 954–1269 (KGKAWWNFRK…KKYYNAMKKL (316 aa)). The helical transmembrane segment at 974–991 (FETFIIFMILLSSGALAF) threads the bilayer. Residues 992–1004 (EDIYIEQRRMIKI) are Extracellular-facing. Residues 1005–1023 (ILEYADQVFTYVFVVEMLL) traverse the membrane as a helical segment. The Cytoplasmic segment spans residues 1024–1037 (KWVAYGFKVYFTNA). The chain crosses the membrane as a helical span at residues 1038-1056 (WCWLDFLIVDVSLISLTAN). The Extracellular portion of the chain corresponds to 1057 to 1064 (ILGYSELG). A helical transmembrane segment spans residues 1065–1083 (AIKSLRTLRALRPLRALSR). Residues 1084 to 1101 (FEGMRVVVVNALVGAIPS) lie on the Cytoplasmic side of the membrane. Residues 1102-1121 (IFNVLLVCLIFWLIFSIMGV) traverse the membrane as a helical segment. The Extracellular segment spans residues 1122–1173 (NLFAGKFYYCFNETSEEVFDHNVVNNKTDCYELMEFHPEVRWMNGKINFDNV). An intrachain disulfide couples Cys-1131 to Cys-1151. Asn-1133 and Asn-1147 each carry an N-linked (GlcNAc...) asparagine glycan. An intramembrane region (pore-forming) is located at residues 1174–1195 (GMGYLALLQVATFKGWMDIMYS). Topologically, residues 1196-1212 (AVDSRAIESQPVYEANL) are extracellular. A helical transmembrane segment spans residues 1213-1234 (YMYIYFVIFIIFGSFFTLNLFI). Residues 1235–1297 (GVIIDNFNQQ…LVFDFVTQQF (63 aa)) are Cytoplasmic-facing. Residues 1253-1255 (IFM) are important for rapid channel inactivation. One copy of the IV repeat lies at 1278 to 1575 (IPRPTNCCQG…WEKFDPTASQ (298 aa)). The chain crosses the membrane as a helical span at residues 1298–1315 (FDIFIMVMICLNMVTMMV). Residues 1316-1326 (ETDDQSAEIEE) are Extracellular-facing. The chain crosses the membrane as a helical span at residues 1327 to 1345 (ILFYINFAFIILFTGECVL). The Cytoplasmic portion of the chain corresponds to 1346-1357 (KITALRYHYFSI). A helical transmembrane segment spans residues 1358–1375 (GWNIFDFVVVILSILGIG). At 1376 to 1388 (LADLIEKYFVSPT) the chain is on the extracellular side. The helical transmembrane segment at 1389–1405 (LFRVIRLARIGRVLRLI) threads the bilayer. The Cytoplasmic segment spans residues 1406–1424 (RGAKGIRTLLFALMMSLPA). The helical transmembrane segment at 1425-1442 (LFNIGLLLFLIMFIFSIF) threads the bilayer. The Extracellular segment spans residues 1443–1464 (GMSNFAYVKKEVGIDDMMNFET). Positions 1465-1487 (FGNSIICMFMITTSAGWDGLLAP) form an intramembrane region, pore-forming. Residues 1488–1516 (ILNSPPDCDPDVDNPGSTTRGNCGNAAVG) lie on the Extracellular side of the membrane. Cys-1495 and Cys-1510 are disulfide-bonded. Residues 1517–1539 (IVFFCSYIVMSFLVVVNMYIAII) form a helical membrane-spanning segment. Residues 1540–1784 (LENFNVATEE…AADNLRESIV (245 aa)) are Cytoplasmic-facing. The IQ domain occupies 1669-1698 (EEVAASTIQRAYRSHILKRCVKQASYMYRD).

The protein belongs to the sodium channel (TC 1.A.1.10) family. Nav1.4/SCN4A subfamily. As to quaternary structure, voltage-gated sodium (Nav) channels consist of an ion-conducting alpha subunit which is functional on its own associated with regulatory beta subunits. Post-translationally, lacks the cysteine which covalently binds the conotoxin GVIIJ. This cysteine (position 719) is speculated in other sodium channel subunits alpha to be implied in covalent binding with the sodium channel subunit beta-2 or beta-4. Expressed in skeletal muscle, heart, brain, spinal cord, and eye.

The protein resides in the cell membrane. The enzyme catalyses Na(+)(in) = Na(+)(out). Its function is as follows. Pore-forming subunit of a voltage-gated sodium (Nav) channel that directly mediates the depolarizing phase of action potentials in excitable membranes. Navs, also called VGSCs (voltage-gated sodium channels) or VDSCs (voltage-dependent sodium channels), operate by switching between closed and open conformations depending on the voltage difference across the membrane. In the open conformation they allow Na(+) ions to selectively pass through the pore, along their electrochemical gradient. The influx of Na+ ions provokes membrane depolarization, initiating the propagation of electrical signals throughout cells and tissues. The protein is Sodium channel protein type 4 subunit alpha B (scn4ab) of Danio rerio (Zebrafish).